Reading from the N-terminus, the 358-residue chain is Alpha-2-HS-glycoprotein (358 aa).

A signal peptide spans 1–18; the sequence is MKFFVLFLCLVQLWGCHS. One can recognise a Cystatin fetuin-A-type 1 domain in the interval 27–133; the sequence is ERNPACDDPE…QFSVVFAKCE (107 aa). 6 cysteine pairs are disulfide-bonded: Cys32-Cys349, Cys89-Cys100, Cys114-Cys132, Cys146-Cys149, Cys208-Cys218, and Cys229-Cys246. Asn99 carries N-linked (GlcNAc...) asparagine glycosylation. Ser134 is modified (phosphoserine). At Thr135 the chain carries Phosphothreonine. Ser138 bears the Phosphoserine mark. Residues 144 to 254 form the Cystatin fetuin-A-type 2 domain; sequence KVCPQCPLLT…TCTVFPTQPV (111 aa). Residues Asn156 and Asn176 are each glycosylated (N-linked (GlcNAc...) asparagine). The tract at residues 257-288 is disordered; sequence LPQPDAASSANPPPAADPAVSPPSSPSVPVDS. The span at 267-282 shows a compositional bias: pro residues; the sequence is NPPPAADPAVSPPSSP. Ser318 and Ser320 each carry phosphoserine. A disordered region spans residues 320-350; that stretch reads SGEAFGPRQKPKVTHPGVASGVGPVPPPPCP.

This sequence belongs to the fetuin family. In terms of processing, phosphorylated by FAM20C in the extracellular medium. Bone marrow.

It is found in the secreted. The polypeptide is Alpha-2-HS-glycoprotein (AHSG) (Cavia porcellus (Guinea pig)).